The following is a 316-amino-acid chain: 4-diphosphocytidyl-2-C-methyl-D-erythritol kinase (316 aa).

Residue K11 is part of the active site. 99–109 (PVAAGLAGGST) provides a ligand contact to ATP. Residue D141 is part of the active site.

This sequence belongs to the GHMP kinase family. IspE subfamily.

It carries out the reaction 4-CDP-2-C-methyl-D-erythritol + ATP = 4-CDP-2-C-methyl-D-erythritol 2-phosphate + ADP + H(+). The protein operates within isoprenoid biosynthesis; isopentenyl diphosphate biosynthesis via DXP pathway; isopentenyl diphosphate from 1-deoxy-D-xylulose 5-phosphate: step 3/6. Its function is as follows. Catalyzes the phosphorylation of the position 2 hydroxy group of 4-diphosphocytidyl-2C-methyl-D-erythritol. The protein is 4-diphosphocytidyl-2-C-methyl-D-erythritol kinase of Gloeothece citriformis (strain PCC 7424) (Cyanothece sp. (strain PCC 7424)).